Reading from the N-terminus, the 842-residue chain is Elongation factor 2 (842 aa).

Positions 17–253 constitute a tr-type G domain; it reads TNVRNMSVIA…LWGDSYFNPK (237 aa). GTP-binding positions include 26-33, 158-161, and 213-215; these read AHVDHGKS, NKVD, and SGL. The residue at position 699 (His699) is a Diphthamide.

Belongs to the TRAFAC class translation factor GTPase superfamily. Classic translation factor GTPase family. EF-G/EF-2 subfamily.

Its subcellular location is the cytoplasm. The catalysed reaction is GTP + H2O = GDP + phosphate + H(+). Its function is as follows. Catalyzes the GTP-dependent ribosomal translocation step during translation elongation. During this step, the ribosome changes from the pre-translocational (PRE) to the post-translocational (POST) state as the newly formed A-site-bound peptidyl-tRNA and P-site-bound deacylated tRNA move to the P and E sites, respectively. Catalyzes the coordinated movement of the two tRNA molecules, the mRNA and conformational changes in the ribosome. The protein is Elongation factor 2 (EFT1) of Debaryomyces hansenii (strain ATCC 36239 / CBS 767 / BCRC 21394 / JCM 1990 / NBRC 0083 / IGC 2968) (Yeast).